The primary structure comprises 491 residues: Aspartyl/glutamyl-tRNA(Asn/Gln) amidotransferase subunit B (491 aa).

This sequence belongs to the GatB/GatE family. GatB subfamily. In terms of assembly, heterotrimer of A, B and C subunits.

It carries out the reaction L-glutamyl-tRNA(Gln) + L-glutamine + ATP + H2O = L-glutaminyl-tRNA(Gln) + L-glutamate + ADP + phosphate + H(+). The catalysed reaction is L-aspartyl-tRNA(Asn) + L-glutamine + ATP + H2O = L-asparaginyl-tRNA(Asn) + L-glutamate + ADP + phosphate + 2 H(+). In terms of biological role, allows the formation of correctly charged Asn-tRNA(Asn) or Gln-tRNA(Gln) through the transamidation of misacylated Asp-tRNA(Asn) or Glu-tRNA(Gln) in organisms which lack either or both of asparaginyl-tRNA or glutaminyl-tRNA synthetases. The reaction takes place in the presence of glutamine and ATP through an activated phospho-Asp-tRNA(Asn) or phospho-Glu-tRNA(Gln). The sequence is that of Aspartyl/glutamyl-tRNA(Asn/Gln) amidotransferase subunit B from Paraburkholderia phytofirmans (strain DSM 17436 / LMG 22146 / PsJN) (Burkholderia phytofirmans).